The chain runs to 154 residues: Large ribosomal subunit protein uL13 (154 aa).

The protein belongs to the universal ribosomal protein uL13 family. Part of the 50S ribosomal subunit.

In terms of biological role, this protein is one of the early assembly proteins of the 50S ribosomal subunit, although it is not seen to bind rRNA by itself. It is important during the early stages of 50S assembly. The protein is Large ribosomal subunit protein uL13 of Rhodopseudomonas palustris (strain ATCC BAA-98 / CGA009).